Reading from the N-terminus, the 250-residue chain is Aquaporin TIP2-1 (250 aa).

N-acetylmethionine is present on Met1. At 1–20 (MAGVAFGSFDDSFSLASLRA) the chain is on the cytoplasmic side. Residue Ala2 is modified to N-acetylalanine; in Aquaporin TIP2-1, N-terminally processed. Residues 21–41 (YLAEFISTLLFVFAGVGSAIA) traverse the membrane as a helical segment. Over 42–54 (YAKLTSDAALDTP) the chain is Vacuolar. A helical transmembrane segment spans residues 55-75 (GLVAIAVCHGFALFVAVAIGA). Topologically, residues 76 to 98 (NISGGHVNPAVTFGLAVGGQITV) are cytoplasmic. The short motif at 83–85 (NPA) is the NPA 1 element. A helical transmembrane segment spans residues 99–119 (ITGVFYWIAQLLGSTAACFLL). Residues 120–141 (KYVTGGLAVPTHSVAAGLGSIE) lie on the Vacuolar side of the membrane. Residues 142–162 (GVVMEIIITFALVYTVYATAA) traverse the membrane as a helical segment. At 163–168 (DPKKGS) the chain is on the cytoplasmic side. The helical transmembrane segment at 169–189 (LGTIAPLAIGLIVGANILAAG) threads the bilayer. Residues 190–215 (PFSGGSMNPARSFGPAVAAGDFSGHW) lie on the Vacuolar side of the membrane. The NPA 2 signature appears at 197–199 (NPA). Residues 216–236 (VYWVGPLIGGGLAGLIYGNVF) form a helical membrane-spanning segment. The Cytoplasmic portion of the chain corresponds to 237-250 (MGSSEHVPLASADF).

This sequence belongs to the MIP/aquaporin (TC 1.A.8) family. TIP (TC 1.A.8.10) subfamily. Interacts with cucumber mosaic virus (CMV) Protein 1a. As to expression, strongly expressed in shoot, rosette, bolt and flowers. Also expressed in roots, flower buds and above ground.

The protein localises to the vacuole membrane. In terms of biological role, aquaporin required to facilitate the transport of water from the vacuolar compartment to the cytoplasm. Does not promote glycerol permeability. Its function is impaired by Hg(2+). Transports urea in yeast cells and Xenopus laevis oocytes in a pH-independent manner. Transports methylammonium or ammonium in yeast cells and Xenopus laevis oocytes, preferentially at high medium pH. May participate in vacuolar compartmentation and detoxification of ammonium. The polypeptide is Aquaporin TIP2-1 (TIP2-1) (Arabidopsis thaliana (Mouse-ear cress)).